Here is a 255-residue protein sequence, read N- to C-terminus: Putative cysteine-rich repeat secretory protein 27 (255 aa).

The N-terminal stretch at 1–26 is a signal peptide; sequence MISKFGSVHILAVVAIQLLIIPSVSS. Gnk2-homologous domains lie at 33 to 135 and 141 to 252; these read YLHH…TINS and YEND…LYPF.

It belongs to the cysteine-rich repeat secretory protein family.

Its subcellular location is the secreted. This is Putative cysteine-rich repeat secretory protein 27 (CRRSP27) from Arabidopsis thaliana (Mouse-ear cress).